The following is a 202-amino-acid chain: Peptide methionine sulfoxide reductase B2, chloroplastic (202 aa).

Residues 1–63 (MAFNIITPGR…RRGFHGGRIV (63 aa)) constitute a chloroplast transit peptide. One can recognise a MsrB domain in the interval 77–198 (EEEWRAILSP…NSISLKFTPE (122 aa)). Zn(2+) is bound by residues Cys116, Cys119, Cys162, and Cys165. Cys134 and Cys187 are disulfide-bonded. Cys187 acts as the Nucleophile in catalysis.

This sequence belongs to the MsrB Met sulfoxide reductase family. Zn(2+) serves as cofactor. In terms of tissue distribution, expressed in stems, young leaves, floral buds and flowers. Expressed at low levels in roots, mature leaves and siliques (at protein level).

Its subcellular location is the plastid. The protein resides in the chloroplast. The enzyme catalyses L-methionyl-[protein] + [thioredoxin]-disulfide + H2O = L-methionyl-(R)-S-oxide-[protein] + [thioredoxin]-dithiol. Functionally, catalyzes the reduction of methionine sulfoxide (MetSO) to methionine in proteins. Specifically reduces the MetSO R-enantiomer. Plays a protective role against oxidative stress by restoring activity to proteins that have been inactivated by methionine oxidation. May play an essential function in association with MSRB1 in maintaining vegetative growth during environmental constraints, through the preservation of photosynthetic antennae. MSRB1 and MSRB2 account for most of the leaf peptide MSR capacity. The protein is Peptide methionine sulfoxide reductase B2, chloroplastic of Arabidopsis thaliana (Mouse-ear cress).